The following is a 297-amino-acid chain: 3-mercaptopyruvate sulfurtransferase (297 aa).

A2 is modified (N-acetylalanine). A Rhodanese 1 domain is found at 25–144 (SSQPLKLLDA…WLNQNLPISS (120 aa)). S35 is subject to Phosphoserine. K40 carries the post-translational modification N6-acetyllysine; alternate. Position 40 is an N6-succinyllysine; alternate (K40). The tract at residues 145–160 (GKSHSEPAEFSAQLDP) is hinge. 2 positions are modified to N6-succinyllysine: K146 and K164. Residues 174 to 288 (DARRFQVVDA…WYMRAQPEHI (115 aa)) form the Rhodanese 2 domain. R188 contributes to the substrate binding site. C248 (cysteine persulfide intermediate) is an active-site residue.

Monomer (active form). Homodimer; disulfide-linked (inactive form). As to expression, expressed in the brain and retina. In the retina, localized to the inner and outer plexiform layer, the inner and outer nuclear layer and the outer segments of photoreceptors. In the brain, localized to neurons of mitral cell layers, glomerular, and external plexiform layers in the olfactory bulb. Also found in Purkinje cell stomata and proximal dendrites. In the spinal cord, localized to large neurons. In the cerebral cortex, localized to pyramidial neurons in layers II/III and V, and in layers I-VI of neocortical areas. In the hippocampus, found in CA1 and CA3 pyramidal cells.

It is found in the cytoplasm. It localises to the mitochondrion. The protein localises to the synapse. The protein resides in the synaptosome. The catalysed reaction is 2-oxo-3-sulfanylpropanoate + [thioredoxin]-dithiol = [thioredoxin]-disulfide + hydrogen sulfide + pyruvate + H(+). Its activity is regulated as follows. By oxidative stress, and thioredoxin. Under oxidative stress conditions, the catalytic cysteine site is converted to a sulfenate which inhibits the MPST enzyme activity. Reduced thioredoxin cleaves an intersubunit disulfide bond to turn on the redox switch and reactivate the enzyme. Inhibited by different oxidants, hydrogen peroxide and tetrathionate. Its function is as follows. Transfer of a sulfur ion to cyanide or to other thiol compounds. Also has weak rhodanese activity. Detoxifies cyanide and is required for thiosulfate biosynthesis. Acts as an antioxidant. In combination with cysteine aminotransferase (CAT), contributes to the catabolism of cysteine and is an important producer of hydrogen sulfide in the brain, retina and vascular endothelial cells. Hydrogen sulfide H(2)S is an important synaptic modulator, signaling molecule, smooth muscle contractor and neuroprotectant. Its production by the 3MST/CAT pathway is regulated by calcium ions. The sequence is that of 3-mercaptopyruvate sulfurtransferase (Mpst) from Mus musculus (Mouse).